A 234-amino-acid chain; its full sequence is Phosphoglycolate phosphatase (234 aa).

Catalysis depends on D15, which acts as the Nucleophile. Positions 15, 17, and 177 each coordinate Mg(2+).

Belongs to the HAD-like hydrolase superfamily. CbbY/CbbZ/Gph/YieH family. In terms of assembly, monomer. The cofactor is Mg(2+). Chloride serves as cofactor.

It carries out the reaction 2-phosphoglycolate + H2O = glycolate + phosphate. Its pathway is organic acid metabolism; glycolate biosynthesis; glycolate from 2-phosphoglycolate: step 1/1. Specifically catalyzes the dephosphorylation of 2-phosphoglycolate. Is involved in the dissimilation of the intracellular 2-phosphoglycolate formed during the DNA repair of 3'-phosphoglycolate ends, a major class of DNA lesions induced by oxidative stress. The chain is Phosphoglycolate phosphatase from Photorhabdus laumondii subsp. laumondii (strain DSM 15139 / CIP 105565 / TT01) (Photorhabdus luminescens subsp. laumondii).